Reading from the N-terminus, the 367-residue chain is Leucine-rich repeat-containing protein 28 (367 aa).

LRR repeat units follow at residues 16–36, 42–63, 66–87, 89–110, 112–133, 135–156, 158–180, 181–202, and 204–226; these read KHKN…ELLK, YLER…LAQK, NLVE…IGSL, KLQC…IGRL, ALRH…VGDL, ELQT…LHMC, SLQY…CQLP, SLNE…LGRS, and ELQY…LYNK.

The chain is Leucine-rich repeat-containing protein 28 (LRRC28) from Homo sapiens (Human).